The following is a 386-amino-acid chain: Bifunctional desaturase/conjugase FADX (386 aa).

A disordered region spans residues 1-28; sequence MGAGGRMSVAPNNSKCEKKESRSVKRVP. A run of 2 helical transmembrane segments spans residues 65–85 and 87–107; these read LSFIFYSIATTYFHLLPSPIT and IAWPVYWAFQGCILTSVWVLG. The short motif at 108-112 is the Histidine box-1 element; sequence HECGH. A Histidine box-2 motif is present at residues 144–148; sequence HRRHH. A run of 3 helical transmembrane segments spans residues 182–202, 228–248, and 250–270; these read ALTLVATLFIGWPLYLAFNVS, IYISDAMIFVAAYVLYKIAMA, and GLAWLVCIYGVPLLIVNALVV. The Histidine box-3 motif lies at 318 to 322; that stretch reads HVIHH.

It belongs to the fatty acid desaturase type 1 family. In terms of tissue distribution, expressed exclusively in developing seeds.

It localises to the endoplasmic reticulum membrane. It carries out the reaction a (9Z,12Z)-octadecadienoyl-containing glycerolipid + 2 Fe(II)-[cytochrome b5] + O2 + 2 H(+) = a (9Z,11E,13E)-octadecatrienoyl-containing glycerolipid + 2 Fe(III)-[cytochrome b5] + 2 H2O. The enzyme catalyses (9Z,12Z,15Z)-octadecatrienoyl-containing glycerolipid + 2 Fe(II)-[cytochrome b5] + O2 + 2 H(+) = a (9Z,11E,13E,15Z)-octadecatetraenoyl-containing glycerolipid + 2 Fe(III)-[cytochrome b5] + 2 H2O. It catalyses the reaction a (9Z)-octadecenoyl-containing glycerolipid + 2 Fe(II)-[cytochrome b5] + O2 + 2 H(+) = a (9Z,12E)-octadecadienoyl-containing glycerolipid + 2 Fe(III)-[cytochrome b5] + 2 H2O. The catalysed reaction is a (9Z)-hexadecenoyl-containing glycerolipid + 2 Fe(II)-[cytochrome b5] + O2 + 2 H(+) = a (9Z,12E)-hexadecadienoyl-containing glycerolipid + 2 Fe(III)-[cytochrome b5] + 2 H2O. It participates in lipid metabolism; polyunsaturated fatty acid biosynthesis. In terms of biological role, converts linoleic acid to alpha-eleostearic acid (18:3(9Z,11E,13E)) and alpha-linolenic acid to alpha-parinaric acid (18:4(9Z,11E,13E,15Z)). Converts a single cis double bond at carbon 12 to two conjugated trans bonds at positions 11 and 13. Can also act as a 12(E) desaturase when acting on the monounsaturated fatty acids oleate and palmitoleate, stereoselectively introducing a trans double bond. In Vernicia fordii (Tung), this protein is Bifunctional desaturase/conjugase FADX.